The chain runs to 713 residues: Serologically defined colon cancer antigen 8 (713 aa).

2 positions are modified to phosphoserine: Ser4 and Ser28. The tract at residues 84–103 (QADKESEVSPSRRRKMSPLR) is disordered. Positions 129 to 175 (IHHLEAEVKFCKEELSGMKNKIQVVVLENEGLQQQLKSQRQEETLRE) form a coiled coil. The interval 194–215 (EDSGVGETSKRPFSHDNADFGK) is disordered. Basic and acidic residues predominate over residues 201-212 (TSKRPFSHDNAD). Residues 216 to 713 (AASAGEQLEL…QLPSMPQSDC (498 aa)) form a sufficient for homodimerization region. 2 coiled-coil regions span residues 223-273 (LELE…LLAA) and 348-707 (EEAN…QLPS). The tract at residues 533–713 (HQLHLTRQEK…QLPSMPQSDC (181 aa)) is mediates interaction with OFD1.

Homodimer. Interacts with OFD1; the interaction is direct. Interacts with FAM161A. Interacts with RABEP2, ERC1 and CEP131. As to expression, expressed in thymus, prostate, testis, ovary, small intestine, colon, mucosa, colon and renal cancer tumors.

The protein resides in the cytoplasm. The protein localises to the cytoskeleton. It localises to the microtubule organizing center. It is found in the centrosome. Its subcellular location is the centriole. The protein resides in the cilium basal body. The protein localises to the cell junction. In terms of biological role, plays a role in the establishment of cell polarity and epithelial lumen formation. Also plays an essential role in ciliogenesis and subsequent Hedgehog signaling pathway that requires the presence of intact primary cilia for pathway activation. Mechanistically, interacts with and mediates RABEP2 centrosomal localization which is critical for ciliogenesis. This chain is Serologically defined colon cancer antigen 8 (SDCCAG8), found in Homo sapiens (Human).